Consider the following 585-residue polypeptide: Lipoprotein LpqB (585 aa).

Residues 1–17 (MGRKLLGLLMLAVLLAG) form the signal peptide. A lipid anchor (N-palmitoyl cysteine) is attached at Cys-18. Cys-18 carries the S-diacylglycerol cysteine lipid modification. 2 disordered regions span residues 24-48 (SSAP…TPGM) and 560-585 (PSAD…VLPG).

Belongs to the LpqB lipoprotein family.

It is found in the cell membrane. In Mycolicibacterium paratuberculosis (strain ATCC BAA-968 / K-10) (Mycobacterium paratuberculosis), this protein is Lipoprotein LpqB.